The primary structure comprises 112 residues: UPF0342 protein SSA_1465 (112 aa).

This sequence belongs to the UPF0342 family.

In Streptococcus sanguinis (strain SK36), this protein is UPF0342 protein SSA_1465.